Reading from the N-terminus, the 235-residue chain is Ribonuclease 3 (235 aa).

An RNase III domain is found at 6 to 135 (LISLEKILGF…VIGAVYFDCG (130 aa)). A Mg(2+)-binding site is contributed by Glu-48. Asp-52 is a catalytic residue. The Mg(2+) site is built by Asn-121 and Glu-124. The active site involves Glu-124. In terms of domain architecture, DRBM spans 162–231 (DEKTTLQELL…AKKALELLKN (70 aa)).

The protein belongs to the ribonuclease III family. As to quaternary structure, homodimer. Mg(2+) serves as cofactor.

It is found in the cytoplasm. The catalysed reaction is Endonucleolytic cleavage to 5'-phosphomonoester.. Functionally, digests double-stranded RNA. Involved in the processing of primary rRNA transcript to yield the immediate precursors to the large and small rRNAs (23S and 16S). Processes some mRNAs, and tRNAs when they are encoded in the rRNA operon. Processes pre-crRNA and tracrRNA of type II CRISPR loci if present in the organism. The sequence is that of Ribonuclease 3 from Carboxydothermus hydrogenoformans (strain ATCC BAA-161 / DSM 6008 / Z-2901).